A 168-amino-acid polypeptide reads, in one-letter code: Cell division inhibitor SulA (168 aa).

Positions 105 to 111 (ALLTGNY) are ftsZ binding. A lon protease binding region spans residues 161–168 (KIHSTLYH).

This sequence belongs to the SulA family. As to quaternary structure, interacts with FtsZ. Is rapidly cleaved and degraded by the Lon protease once DNA damage is repaired.

Its function is as follows. Component of the SOS system and an inhibitor of cell division. Accumulation of SulA causes rapid cessation of cell division and the appearance of long, non-septate filaments. In the presence of GTP, binds a polymerization-competent form of FtsZ in a 1:1 ratio, thus inhibiting FtsZ polymerization and therefore preventing it from participating in the assembly of the Z ring. This mechanism prevents the premature segregation of damaged DNA to daughter cells during cell division. This Pectobacterium carotovorum subsp. carotovorum (strain PC1) protein is Cell division inhibitor SulA.